The sequence spans 49 residues: U6-myrmicitoxin-Mri1a (49 aa).

A signal peptide spans 1–27 (MNPKALCSFLLATFLLLTVTIMPSVHA). A propeptide spanning residues 28–35 (NAEANADA) is cleaved from the precursor.

Contains 1 disulfide bond. In terms of tissue distribution, expressed by the venom gland.

Its subcellular location is the secreted. This chain is U6-myrmicitoxin-Mri1a, found in Manica rubida (European giant red ant).